The primary structure comprises 206 residues: Thymidylate kinase (206 aa).

Position 11-18 (11-18) interacts with ATP; that stretch reads GIDGAGKT.

This sequence belongs to the thymidylate kinase family.

The catalysed reaction is dTMP + ATP = dTDP + ADP. In terms of biological role, phosphorylation of dTMP to form dTDP in both de novo and salvage pathways of dTTP synthesis. The polypeptide is Thymidylate kinase (Burkholderia cenocepacia (strain HI2424)).